A 286-amino-acid chain; its full sequence is 4-hydroxybenzoate octaprenyltransferase (286 aa).

Transmembrane regions (helical) follow at residues 22–42 (IGTL…SAGV), 45–65 (FSLL…GCVI), 90–110 (LTAV…FVLV), 113–133 (LNQF…IYPF), 142–162 (QVVL…AVVG), 169–189 (WLLF…YAMV), 212–232 (LYIA…GWLE), 236–256 (VSYY…QWLI), and 265–285 (FRAF…IMLA).

The protein belongs to the UbiA prenyltransferase family. Mg(2+) is required as a cofactor.

Its subcellular location is the cell inner membrane. The catalysed reaction is all-trans-octaprenyl diphosphate + 4-hydroxybenzoate = 4-hydroxy-3-(all-trans-octaprenyl)benzoate + diphosphate. Its pathway is cofactor biosynthesis; ubiquinone biosynthesis. In terms of biological role, catalyzes the prenylation of para-hydroxybenzoate (PHB) with an all-trans polyprenyl group. Mediates the second step in the final reaction sequence of ubiquinone-8 (UQ-8) biosynthesis, which is the condensation of the polyisoprenoid side chain with PHB, generating the first membrane-bound Q intermediate 3-octaprenyl-4-hydroxybenzoate. In Tolumonas auensis (strain DSM 9187 / NBRC 110442 / TA 4), this protein is 4-hydroxybenzoate octaprenyltransferase.